We begin with the raw amino-acid sequence, 578 residues long: E3 ubiquitin protein ligase RIN2 (578 aa).

The next 6 helical transmembrane spans lie at 6–26 (LPVS…WTEL), 58–78 (FTIA…VLSL), 111–131 (LVIP…TVLC), 161–181 (VYSV…LSLM), 186–206 (IGSA…FETL), and 272–292 (YLHI…VLFL). The RING-type; atypical zinc-finger motif lies at 337-379 (CAICREPMAKAKRLHCNHLFHLGCLRSWLDQGLNEVYSCPTCR). The span at 504-513 (QASTSSTTVP) shows a compositional bias: polar residues. The interval 504–524 (QASTSSTTVPPGNGGRTGGLH) is disordered. Residues 538-578 (NILAMAETVREVMPHVPDEIIFQDLQRTNSVAVTVNNLLQM) enclose the CUE domain.

As to quaternary structure, interacts (via C-terminus) with RPM1 (via N-terminus).

The protein resides in the membrane. The enzyme catalyses S-ubiquitinyl-[E2 ubiquitin-conjugating enzyme]-L-cysteine + [acceptor protein]-L-lysine = [E2 ubiquitin-conjugating enzyme]-L-cysteine + N(6)-ubiquitinyl-[acceptor protein]-L-lysine.. It participates in protein modification; protein ubiquitination. E3 ubiquitin protein ligase that acts as a positive regulator of RPM1- and RPS2-dependent hypersensitive response (HR), in association with RIN3. Probably not required for RPM1 degradation during HR. This chain is E3 ubiquitin protein ligase RIN2 (RIN2), found in Arabidopsis thaliana (Mouse-ear cress).